The chain runs to 327 residues: MTSTLRVAFAGTPEFAQIALAAIHQAGFPVVAVLSQPDRPAGRGMQLQASPVTQYAVTHGFAPILQPPSLRRTGKYPQEAAEAIDALTAQRPDVMVVAAYGLILPQEVLDLPRFGCINIHASLLPRWRGAAPIHRAIEAGDAESGITLMQMDAGLDTGDMIAMERVPIGLTDTTGTLHDTLAALGGRMVVEALAKLAQDGKLHATPQPAEGITYAEKIAKDEAALDWSRHAAALLRQVHAFNPFPGASAALDGVAIKFWQAEVLADRPAEAEPGVVLAANAEGVTIACGAGALRVTQLQKPGGKRLPAREFLQGLAIQPGQRFASRG.

A (6S)-5,6,7,8-tetrahydrofolate-binding site is contributed by serine 122–proline 125.

Belongs to the Fmt family.

The catalysed reaction is L-methionyl-tRNA(fMet) + (6R)-10-formyltetrahydrofolate = N-formyl-L-methionyl-tRNA(fMet) + (6S)-5,6,7,8-tetrahydrofolate + H(+). Its function is as follows. Attaches a formyl group to the free amino group of methionyl-tRNA(fMet). The formyl group appears to play a dual role in the initiator identity of N-formylmethionyl-tRNA by promoting its recognition by IF2 and preventing the misappropriation of this tRNA by the elongation apparatus. This is Methionyl-tRNA formyltransferase from Ralstonia pickettii (strain 12J).